Consider the following 163-residue polypeptide: Disulfide bond formation protein B 1 (163 aa).

The Cytoplasmic portion of the chain corresponds to 1-9; sequence MPLASPRQL. A helical membrane pass occupies residues 10-26; the sequence is FLLAFLACVAIMGGALY. Residues 27 to 44 lie on the Periplasmic side of the membrane; it reads LEHVVGLEACPLCVVQRI. Residues cysteine 36 and cysteine 39 are joined by a disulfide bond. A helical transmembrane segment spans residues 45–61; sequence FFILIGLTCLAGAIQGP. At 62–67 the chain is on the cytoplasmic side; that stretch reads GLRGRR. A helical transmembrane segment spans residues 68–85; it reads IYSVLVFLLALGGGATAA. Residues 86 to 142 are Periplasmic-facing; the sequence is RQVWLQTVPLDQLPACLPSLDYMMQALPFQEVIRLVLHGTADCAQVSWTLFTLSIPE. Cysteine 101 and cysteine 128 are oxidised to a cystine. Residues 143-161 form a helical membrane-spanning segment; sequence WSLLAFVAYLGFSIVQFLR. The Cytoplasmic segment spans residues 162-163; it reads RA.

It belongs to the DsbB family.

The protein resides in the cell inner membrane. In terms of biological role, required for disulfide bond formation in some periplasmic proteins. Acts by oxidizing the DsbA protein. In Pseudomonas aeruginosa (strain ATCC 15692 / DSM 22644 / CIP 104116 / JCM 14847 / LMG 12228 / 1C / PRS 101 / PAO1), this protein is Disulfide bond formation protein B 1 (dsbB1).